The chain runs to 859 residues: DNA mismatch repair protein MutS (859 aa).

Position 617–624 (G617–S624) interacts with ATP.

Belongs to the DNA mismatch repair MutS family.

In terms of biological role, this protein is involved in the repair of mismatches in DNA. It is possible that it carries out the mismatch recognition step. This protein has a weak ATPase activity. In Stutzerimonas stutzeri (strain A1501) (Pseudomonas stutzeri), this protein is DNA mismatch repair protein MutS.